The chain runs to 493 residues: Cytoplasmic tRNA 2-thiolation protein 2 (493 aa).

A Phosphoserine modification is found at Ser-489.

It belongs to the CTU2/NCS2 family. As to quaternary structure, interacts with NCS6 and URM1. May act by forming a heterodimer with NCS6.

Its subcellular location is the cytoplasm. It participates in tRNA modification; 5-methoxycarbonylmethyl-2-thiouridine-tRNA biosynthesis. Functionally, plays a central role in 2-thiolation of mcm(5)S(2)U at tRNA wobble positions of tRNA(Lys), tRNA(Glu) and tRNA(Gln). May act by forming a heterodimer with NCS6 that ligates sulfur from thiocarboxylated URM1 onto the uridine of tRNAs at wobble position. Prior mcm(5) tRNA modification by the elongator complex is required for 2-thiolation. May also be involved in protein urmylation. The protein is Cytoplasmic tRNA 2-thiolation protein 2 of Saccharomyces cerevisiae (strain RM11-1a) (Baker's yeast).